The sequence spans 762 residues: Glucan endo-1,3-beta-glucosidase BGN13.1 (762 aa).

The N-terminal stretch at 1 to 16 (MLKLTALVALLLGAAS) is a signal peptide. A propeptide spanning residues 17–33 (ATPTPSPPASDEGITKR) is cleaved from the precursor.

Belongs to the glycosyl hydrolase 55 family. Post-translationally, does not seem to be glycosylated.

The protein resides in the secreted. It catalyses the reaction Hydrolysis of (1-&gt;3)-beta-D-glucosidic linkages in (1-&gt;3)-beta-D-glucans.. Its activity is regulated as follows. Inhibited by glucose. Involved in mycoparasitism, hydrolyzes yeast and fungal cell walls. Classified as a small-oligosaccharide-producing type based its the end products: glucose, laminaribiose or laminaritetraose. The chain is Glucan endo-1,3-beta-glucosidase BGN13.1 (bgn13.1) from Trichoderma harzianum (Hypocrea lixii).